A 153-amino-acid polypeptide reads, in one-letter code: Protein ripply2.2 (153 aa).

The short motif at 58 to 61 is the WRPW motif; required for transcriptional repression and interaction with tle4 element; it reads WRPW. The tract at residues 93–128 is ripply homology domain; the sequence is HPVRLFWPKSKLLDNTYQEAADLLRNFPVQATISLY. Residues 127 to 153 form a disordered region; it reads LYNDSESDTDNEEDSSEEEQDSGFESE. The segment covering 131-153 has biased composition (acidic residues); sequence SESDTDNEEDSSEEEQDSGFESE.

Belongs to the ripply family. Interacts with tle4 and tbx6, and mediates interaction between these proteins. In terms of tissue distribution, expressed in the presomitic mesoderm (PSM) in the anterior halves of somitomeres S-I, S-II and S-III.

It localises to the nucleus. In terms of biological role, required during somitogenesis for the formation of somite boundaries. Represses the expression of genes involved in somite segmentation by acting with the corepressor tle4 to down-regulate the transcriptional activity of tbx6. May act by regulating the activity of tle4. Represses transcription of delta2, thy1 and ripply2.2/bowline itself. In Xenopus laevis (African clawed frog), this protein is Protein ripply2.2 (ripply2.2).